The chain runs to 258 residues: Regulatory protein RecX (258 aa).

The protein belongs to the RecX family.

The protein resides in the cytoplasm. Its function is as follows. Modulates RecA activity. This Streptococcus pneumoniae (strain Hungary19A-6) protein is Regulatory protein RecX.